Consider the following 179-residue polypeptide: MKAESVSQWILVILFATLLFFAFTGIFVSTLLVVLTPEGFAFLLGFLGALVFANKLLFGYGSFVITAEAFLTNKEIDRRELAKKTNEPVERTENLSIPALLALWLAGLDYYRYAYYGIFTLMLIIMLLSKFDLLGALTIGNYFEGAFWGAAVITLFVFALEITANYLMARINEEVSLNG.

4 helical membrane-spanning segments follow: residues 9–31 (WILVILFATLLFFAFTGIFVSTL), 41–63 (AFLLGFLGALVFANKLLFGYGSF), 114–136 (AYYGIFTLMLIIMLLSKFDLLGA), and 146–168 (AFWGAAVITLFVFALEITANYLM).

Its subcellular location is the cell membrane. This is an uncharacterized protein from Aquifex aeolicus (strain VF5).